The sequence spans 234 residues: UPF0758 protein Smal_0281 (234 aa).

Residues 103–225 enclose the MPN domain; sequence VGNNPAAVGR…PVSFAERGLL (123 aa). The Zn(2+) site is built by His174, His176, and Asp187. The short motif at 174–187 is the JAMM motif element; sequence HNHPSGDPEPSSAD.

The protein belongs to the UPF0758 family.

The polypeptide is UPF0758 protein Smal_0281 (Stenotrophomonas maltophilia (strain R551-3)).